Reading from the N-terminus, the 154-residue chain is 17.6 kDa class I heat shock protein (154 aa).

Residues glutamate 40 to glycine 154 form the sHSP domain.

It belongs to the small heat shock protein (HSP20) family. Forms oligomeric structures.

Its subcellular location is the cytoplasm. In Glycine max (Soybean), this protein is 17.6 kDa class I heat shock protein (HSP17.6-L).